Reading from the N-terminus, the 335-residue chain is tRNA N6-adenosine threonylcarbamoyltransferase (335 aa).

Residues histidine 109, histidine 113, and tyrosine 130 each contribute to the a divalent metal cation site. Substrate is bound by residues 130–134 (YVSGG), aspartate 162, glycine 177, glutamate 181, and asparagine 266. Position 294 (aspartate 294) interacts with a divalent metal cation.

Belongs to the KAE1 / TsaD family. In terms of assembly, component of the EKC/KEOPS complex composed of at least GON7, TP53RK, TPRKB, OSGEP and LAGE3; the whole complex dimerizes. Interacts with PRAME. The cofactor is a divalent metal cation. As to expression, widely expressed at low level. Expressed in heart, placenta, liver, kidney, lung, brain, skeletal muscle and pancreas.

It localises to the cytoplasm. It is found in the nucleus. The catalysed reaction is L-threonylcarbamoyladenylate + adenosine(37) in tRNA = N(6)-L-threonylcarbamoyladenosine(37) in tRNA + AMP + H(+). In terms of biological role, component of the EKC/KEOPS complex that is required for the formation of a threonylcarbamoyl group on adenosine at position 37 (t(6)A37) in tRNAs that read codons beginning with adenine. The complex is probably involved in the transfer of the threonylcarbamoyl moiety of threonylcarbamoyl-AMP (TC-AMP) to the N6 group of A37. OSGEP likely plays a direct catalytic role in this reaction, but requires other protein(s) of the complex to fulfill this activity. In Homo sapiens (Human), this protein is tRNA N6-adenosine threonylcarbamoyltransferase.